We begin with the raw amino-acid sequence, 185 residues long: Ribosome-recycling factor (185 aa).

Belongs to the RRF family.

It localises to the cytoplasm. Responsible for the release of ribosomes from messenger RNA at the termination of protein biosynthesis. May increase the efficiency of translation by recycling ribosomes from one round of translation to another. The chain is Ribosome-recycling factor from Actinobacillus pleuropneumoniae serotype 5b (strain L20).